Here is a 602-residue protein sequence, read N- to C-terminus: MKNKNPFNIFFPLSLDKIENLEKIKKNCSSIQYAWLSGYFWNLANQTPSRLICEKNEFFRKDNEEKIITIISASQTGNARQLAKRFNKYLKNENKKTNLIDAADYNFKKIKNERFLILIISTQGEGEPPEEALSFYKFIMSKKAPRLENLHYSVFGLGDVSYNLFCQAGKDFDKRFSELGGKSLLHRLDSDIEYESNYIQWSEELLLAINKIDVSTCSVFKKNDKKNFIDKLNYTKYKPAVATVLLNQKITGRNSTKDVHHIELDITNSNIVYTPGDALGVWYQNSSQLIKQILKLLSIRISDKVKVKDKIITIFEALKKNFELTTNTKHIIQKYTDVTQNKFLKKIISDNKKLNNYVKKTPLLKMIYDHPKKLSSQQLISILRPLKPRLYSISSSQSEMNDEVHITVGVVKKQISGTIHLGGSSSYLSQFLKIDDSVKIFVEEKSNFRLPENKDVPIIMIGSGTGIAPFRAFIQQRDNDKATGKNWIFFGNPNFTEDFLYQLEWQKYLKKKLLTKMSLAWSRDQKEKIYVQDKIRENGKELWEWVNQGAQIYVCGNASKMAKDVEKELLDVFSKNGSMDIEESSEFLNNLRITRRYQRDVY.

A Flavodoxin-like domain is found at 68–206 (ITIISASQTG…NYIQWSEELL (139 aa)). Residues 74 to 79 (SQTGNA), 121 to 124 (STQG), and 157 to 166 (LGDVSYNLFC) contribute to the FMN site. Residues 237–451 (YKPAVATVLL…VEEKSNFRLP (215 aa)) enclose the FAD-binding FR-type domain. Residues threonine 325, lysine 359, 389–392 (RLYS), 407–409 (TVG), and 422–425 (GGSS) contribute to the FAD site. NADP(+) is bound by residues 522 to 523 (SR), 528 to 532 (KIYVQ), and aspartate 564. Tyrosine 602 provides a ligand contact to FAD.

It belongs to the NADPH-dependent sulphite reductase flavoprotein subunit CysJ family. This sequence in the N-terminal section; belongs to the flavodoxin family. In the C-terminal section; belongs to the flavoprotein pyridine nucleotide cytochrome reductase family. Alpha(8)-beta(8). The alpha component is a flavoprotein, the beta component is a hemoprotein. FAD is required as a cofactor. Requires FMN as cofactor.

It carries out the reaction hydrogen sulfide + 3 NADP(+) + 3 H2O = sulfite + 3 NADPH + 4 H(+). It functions in the pathway sulfur metabolism; hydrogen sulfide biosynthesis; hydrogen sulfide from sulfite (NADPH route): step 1/1. Functionally, component of the sulfite reductase complex that catalyzes the 6-electron reduction of sulfite to sulfide. This is one of several activities required for the biosynthesis of L-cysteine from sulfate. The flavoprotein component catalyzes the electron flow from NADPH -&gt; FAD -&gt; FMN to the hemoprotein component. In Buchnera aphidicola subsp. Schizaphis graminum (strain Sg), this protein is Sulfite reductase [NADPH] flavoprotein alpha-component.